Reading from the N-terminus, the 304-residue chain is Quorum-quenching protein AidA (304 aa).

This sequence belongs to the AB hydrolase superfamily.

Involved in quorum quenching (QQ). Inhibits motility and biofilm formation. Could contribute in bacterial competition, as it is capable of hydrolyzing the signaling molecules that mediate interspecies communication. The polypeptide is Quorum-quenching protein AidA (Acinetobacter baumannii (strain MDR-ZJ06)).